Consider the following 130-residue polypeptide: Protein ApaG (130 aa).

Positions 3–127 constitute an ApaG domain; that stretch reads SAVTRGIEVT…FSLDVPEQRR (125 aa).

This is Protein ApaG from Brucella canis (strain ATCC 23365 / NCTC 10854 / RM-666).